Here is a 2393-residue protein sequence, read N- to C-terminus: Leucine-rich repeat serine/threonine-protein kinase 1 (2393 aa).

ANK repeat units follow at residues 56–86 (HGRT…SLNL), 90–120 (RGKT…PMKS), 123–152 (EGHC…KESE), 197–226 (EDET…HLLQ), 230–259 (SKDT…QLVK), 264–293 (EGST…PSEF), 317–347 (ECRT…SIDG), 361–390 (RGRT…DVNL), 407–437 (IGSG…DTDN), and 439–464 (ALRL…FADP). LRR repeat units follow at residues 532 to 553 (AITR…LFQM), 555 to 576 (SLRS…TYYI), 580 to 600 (SLEI…QFLS), 604 to 625 (QLQQ…IWLC), and 627 to 648 (ALKE…ARAS). The interval 649-675 (RGERPRLNNSNNNFNTQSPTQESNPIV) is disordered. LRR repeat units follow at residues 718–739 (TLTT…LACT), 742–763 (RLLI…ACVP), and 765–787 (HLRT…SPLH). A disordered region spans residues 797-844 (TSNGSMLPKRRNSPARQHRSRSKSAVRSQRSLSVSRHHALIDPQKEEE). Over residues 804–820 (PKRRNSPARQHRSRSKS) the composition is skewed to basic residues. Positions 821–830 (AVRSQRSLSV) are enriched in polar residues. The span at 835–844 (ALIDPQKEEE) shows a compositional bias: basic and acidic residues. 4 LRR repeats span residues 856–877 (WLKT…NAAS), 883–905 (ALNV…ARLT), 906–928 (LLSM…YGML), and 930–952 (RLWS…VNVE). Residues 969–1167 (ESKTYHHLRL…NTIYRTAWEV (199 aa)) form the Roc domain. GTP is bound by residues 982-989 (GSDGVGKS), 1040-1044 (DFGGQ), and 1098-1101 (TNLD). In terms of domain architecture, COR spans 1233–1422 (FYAACTFLHD…GFWSRLVTRI (190 aa)). Disordered regions lie at residues 1361 to 1382 (CPSP…TDQN) and 1596 to 1633 (RNGS…RTTG). 2 stretches are compositionally biased toward polar residues: residues 1366–1382 (GSPT…TDQN) and 1620–1633 (ITSS…RTTG). One can recognise a Protein kinase domain in the interval 1694 to 1992 (LKRSRMLGRG…LVGFCAAPEF (299 aa)). Residues 1700–1708 (LGRGAFGFV) and Lys-1726 each bind ATP. The active-site Proton acceptor is Asp-1847.

Belongs to the protein kinase superfamily. TKL Ser/Thr protein kinase family. ROCO subfamily. Mg(2+) serves as cofactor. It depends on Mn(2+) as a cofactor. As to expression, expressed in cell bodies, but not in dendritic or axonal processes, of adult head neurons. Also present in non-neuronal tissues, such as the body wall musculature and the epithelial cells of the nematode vulva.

Its subcellular location is the golgi apparatus. It carries out the reaction L-seryl-[protein] + ATP = O-phospho-L-seryl-[protein] + ADP + H(+). The catalysed reaction is L-threonyl-[protein] + ATP = O-phospho-L-threonyl-[protein] + ADP + H(+). In terms of biological role, determines polarized sorting of synaptic vesicle (SV) proteins to the axons by excluding SV proteins from the dendrite-specific transport machinery in the Golgi. Role in stress response. Appears to antagonize the effects of pink-1 both in the regulation of axon guidance and stress response. The protein is Leucine-rich repeat serine/threonine-protein kinase 1 (lrk-1) of Caenorhabditis elegans.